A 397-amino-acid polypeptide reads, in one-letter code: 2,3-bisphosphoglycerate-independent phosphoglycerate mutase (397 aa).

The protein belongs to the BPG-independent phosphoglycerate mutase family. A-PGAM subfamily.

It carries out the reaction (2R)-2-phosphoglycerate = (2R)-3-phosphoglycerate. It participates in carbohydrate degradation; glycolysis; pyruvate from D-glyceraldehyde 3-phosphate: step 3/5. Its function is as follows. Catalyzes the interconversion of 2-phosphoglycerate and 3-phosphoglycerate. The chain is 2,3-bisphosphoglycerate-independent phosphoglycerate mutase from Methanosarcina acetivorans (strain ATCC 35395 / DSM 2834 / JCM 12185 / C2A).